A 54-amino-acid chain; its full sequence is Ovomucoid (54 aa).

In terms of domain architecture, Kazal-like spans 4-54 (VDCSDYPTHGCTLELKPICGSDNQTYSNKCGFCNAVAQSNGTLTLSHFGKC). 3 cysteine pairs are disulfide-bonded: Cys6–Cys36, Cys14–Cys33, and Cys22–Cys54. An N-linked (GlcNAc...) asparagine glycan is attached at Asn43.

The protein resides in the secreted. This chain is Ovomucoid, found in Aepypodius arfakianus (Wattled brush turkey).